Reading from the N-terminus, the 488-residue chain is Bifunctional pantoate ligase/cytidylate kinase (488 aa).

Residue 1–8 (MGALHRAH) participates in ATP binding. Residues 1–251 (MGALHRAHGQ…CGETRLIDHT (251 aa)) are pantoate--beta-alanine ligase. Residue histidine 8 is the Proton donor of the active site. Glutamine 36 serves as a coordination point for (R)-pantoate. Glutamine 36 lines the beta-alanine pocket. 125 to 128 (GEKD) provides a ligand contact to ATP. Glutamine 131 is a binding site for (R)-pantoate. Residues valine 154 and 162-165 (CSSR) each bind ATP. The cytidylate kinase stretch occupies residues 252–488 (FLMSRQPIVA…PEEVWPTPGS (237 aa)).

The protein in the N-terminal section; belongs to the pantothenate synthetase family. This sequence in the C-terminal section; belongs to the cytidylate kinase family. Type 1 subfamily.

The protein resides in the cytoplasm. It carries out the reaction (R)-pantoate + beta-alanine + ATP = (R)-pantothenate + AMP + diphosphate + H(+). The enzyme catalyses CMP + ATP = CDP + ADP. The catalysed reaction is dCMP + ATP = dCDP + ADP. It functions in the pathway cofactor biosynthesis; (R)-pantothenate biosynthesis; (R)-pantothenate from (R)-pantoate and beta-alanine: step 1/1. Functionally, catalyzes the condensation of pantoate with beta-alanine in an ATP-dependent reaction via a pantoyl-adenylate intermediate. Catalyzes the transfer of a phosphate group from ATP to either CMP or dCMP to form CDP or dCDP and ADP, respectively. The chain is Bifunctional pantoate ligase/cytidylate kinase from Prochlorococcus marinus (strain MIT 9303).